Reading from the N-terminus, the 232-residue chain is Leucyl/phenylalanyl-tRNA--protein transferase (232 aa).

Belongs to the L/F-transferase family.

The protein localises to the cytoplasm. The enzyme catalyses N-terminal L-lysyl-[protein] + L-leucyl-tRNA(Leu) = N-terminal L-leucyl-L-lysyl-[protein] + tRNA(Leu) + H(+). The catalysed reaction is N-terminal L-arginyl-[protein] + L-leucyl-tRNA(Leu) = N-terminal L-leucyl-L-arginyl-[protein] + tRNA(Leu) + H(+). It catalyses the reaction L-phenylalanyl-tRNA(Phe) + an N-terminal L-alpha-aminoacyl-[protein] = an N-terminal L-phenylalanyl-L-alpha-aminoacyl-[protein] + tRNA(Phe). In terms of biological role, functions in the N-end rule pathway of protein degradation where it conjugates Leu, Phe and, less efficiently, Met from aminoacyl-tRNAs to the N-termini of proteins containing an N-terminal arginine or lysine. This is Leucyl/phenylalanyl-tRNA--protein transferase from Nitrosospira multiformis (strain ATCC 25196 / NCIMB 11849 / C 71).